We begin with the raw amino-acid sequence, 432 residues long: 3-phosphoshikimate 1-carboxyvinyltransferase (432 aa).

Residues Lys21, Ser22, and Arg26 each coordinate 3-phosphoshikimate. Lys21 provides a ligand contact to phosphoenolpyruvate. 2 residues coordinate phosphoenolpyruvate: Gly94 and Arg122. 3-phosphoshikimate is bound by residues Ser168, Gln170, Asp317, and Lys344. Gln170 contacts phosphoenolpyruvate. Asp317 acts as the Proton acceptor in catalysis. Residues Arg348 and Arg391 each coordinate phosphoenolpyruvate.

Belongs to the EPSP synthase family. In terms of assembly, monomer.

Its subcellular location is the cytoplasm. It carries out the reaction 3-phosphoshikimate + phosphoenolpyruvate = 5-O-(1-carboxyvinyl)-3-phosphoshikimate + phosphate. The protein operates within metabolic intermediate biosynthesis; chorismate biosynthesis; chorismate from D-erythrose 4-phosphate and phosphoenolpyruvate: step 6/7. Its function is as follows. Catalyzes the transfer of the enolpyruvyl moiety of phosphoenolpyruvate (PEP) to the 5-hydroxyl of shikimate-3-phosphate (S3P) to produce enolpyruvyl shikimate-3-phosphate and inorganic phosphate. The protein is 3-phosphoshikimate 1-carboxyvinyltransferase of Petrotoga mobilis (strain DSM 10674 / SJ95).